The sequence spans 277 residues: Orotidine 5'-phosphate decarboxylase (277 aa).

Substrate-binding positions include aspartate 40, 62–64 (KTH), 93–102 (DRKFIDIGNT), tyrosine 229, and arginine 247. The active-site Proton donor is the lysine 95.

Belongs to the OMP decarboxylase family.

The enzyme catalyses orotidine 5'-phosphate + H(+) = UMP + CO2. Its pathway is pyrimidine metabolism; UMP biosynthesis via de novo pathway; UMP from orotate: step 2/2. The polypeptide is Orotidine 5'-phosphate decarboxylase (pyrG) (Aspergillus awamori (Black koji mold)).